A 202-amino-acid polypeptide reads, in one-letter code: Small ribosomal subunit protein uS4c (202 aa).

In terms of domain architecture, S4 RNA-binding spans 90–150; it reads MRLDNVIFRL…NQRKSQAIIN (61 aa).

It belongs to the universal ribosomal protein uS4 family. In terms of assembly, part of the 30S ribosomal subunit. Contacts protein S5. The interaction surface between S4 and S5 is involved in control of translational fidelity.

It localises to the plastid. It is found in the chloroplast. In terms of biological role, one of the primary rRNA binding proteins, it binds directly to 16S rRNA where it nucleates assembly of the body of the 30S subunit. Its function is as follows. With S5 and S12 plays an important role in translational accuracy. The protein is Small ribosomal subunit protein uS4c (rps4) of Canalohypopterygium tamariscinum (Moss).